Consider the following 380-residue polypeptide: MSTSNLFSTVPFGKNVLNHKIVLSPMTRFRADDNGVPLSYMKTFYAQRASVRGTLLVTDAVAICPRTKGFPNVPGIWHKDRIAAWKEVVDEVHSKGSFIWLQLWATGRAADLEALTSRGLKLGSSSEVPVAPGEPTPRALDEDEIQQYILDYVQGAKNAVHGAGFDGVEIHGANGFLIDQFLQSSCNRRTDQWGGSIENRSRFGLEITRGVVDAVGHDRVGMKLSPWSTFQGMGTMDDLVPQFEHFITCLREMDIAYLHLANSRWVEEEDPSIRTHPDFHNQTFVQMWGKKRPILLAGGYDPDSARRLVDQTYSDRNNVLVVFGRHYISNPDLPFRLRMGIALQKYNRDTFYIPCSGEGYVDYPFCKEYLDQADEAAVAG.

Residues 25–27 (PMT), Ala60, Gln102, and His171 each bind FMN. Substrate contacts are provided by His171 and Asn174. FMN contacts are provided by residues Lys223, Gly299, 324–325 (GR), and Arg325. Tyr352 contributes to the substrate binding site.

Belongs to the NADH:flavin oxidoreductase/NADH oxidase family.

Functionally, probable inactive dehydrogenase; part of the gene cluster that mediates the biosynthesis of fungal ergot alkaloid. DmaW catalyzes the first step of ergot alkaloid biosynthesis by condensing dimethylallyl diphosphate (DMAP) and tryptophan to form 4-dimethylallyl-L-tryptophan. The second step is catalyzed by the methyltransferase easF that methylates 4-dimethylallyl-L-tryptophan in the presence of S-adenosyl-L-methionine, resulting in the formation of 4-dimethylallyl-L-abrine. The catalase easC and the FAD-dependent oxidoreductase easE then transform 4-dimethylallyl-L-abrine to chanoclavine-I which is further oxidized by easD in the presence of NAD(+), resulting in the formation of chanoclavine-I aldehyde. Agroclavine dehydrogenase easG then mediates the conversion of chanoclavine-I aldehyde to agroclavine via a non-enzymatic adduct reaction: the substrate is an iminium intermediate that is formed spontaneously from chanoclavine-I aldehyde in the presence of glutathione. The presence of easA is not required to complete this reaction. Further conversion of agroclavine to paspalic acid is a two-step process involving oxidation of agroclavine to elymoclavine and of elymoclavine to paspalic acid, the second step being performed by the elymoclavine oxidase cloA. Paspalic acid is then further converted to D-lysergic acid. Ergopeptines are assembled from D-lysergic acid and three different amino acids by the D-lysergyl-peptide-synthetases composed each of a monomudular and a trimodular nonribosomal peptide synthetase subunit. LpsB and lpsC encode the monomodular subunits responsible for D-lysergic acid activation and incorporation into the ergopeptine backbone. LpsA1 and A2 subunits encode the trimodular nonribosomal peptide synthetase assembling the tripeptide portion of ergopeptines. LpsA1 is responsible for formation of the major ergopeptine, ergotamine, and lpsA2 for alpha-ergocryptine, the minor ergopeptine of the total alkaloid mixture elaborated by C.purpurea. D-lysergyl-tripeptides are assembled by the nonribosomal peptide synthetases and released as N-(D-lysergyl-aminoacyl)-lactams. Cyclolization of the D-lysergyl-tripeptides is performed by the Fe(2+)/2-ketoglutarate-dependent dioxygenase easH which introduces a hydroxyl group into N-(D-lysergyl-aminoacyl)-lactam at alpha-C of the aminoacyl residue followed by spontaneous condensation with the terminal lactam carbonyl group. In Claviceps purpurea (Ergot fungus), this protein is Probable inactive dehydrogenase easA.